The sequence spans 235 residues: Aspartate/glutamate leucyltransferase (235 aa).

It belongs to the R-transferase family. Bpt subfamily.

The protein resides in the cytoplasm. The enzyme catalyses N-terminal L-glutamyl-[protein] + L-leucyl-tRNA(Leu) = N-terminal L-leucyl-L-glutamyl-[protein] + tRNA(Leu) + H(+). It carries out the reaction N-terminal L-aspartyl-[protein] + L-leucyl-tRNA(Leu) = N-terminal L-leucyl-L-aspartyl-[protein] + tRNA(Leu) + H(+). Functions in the N-end rule pathway of protein degradation where it conjugates Leu from its aminoacyl-tRNA to the N-termini of proteins containing an N-terminal aspartate or glutamate. This chain is Aspartate/glutamate leucyltransferase, found in Pseudomonas putida (strain ATCC 700007 / DSM 6899 / JCM 31910 / BCRC 17059 / LMG 24140 / F1).